A 483-amino-acid chain; its full sequence is CdaA regulatory protein CdaR (483 aa).

Residues 9–26 (WAVKIIALLFALLLYVAV) form a helical membrane-spanning segment. 4 YbbR-like domains span residues 55–135 (IPVK…TVTI), 143–228 (FPVE…KITV), 237–316 (VPFK…TLHI), and 329–394 (VPIK…VNGP). A disordered region spans residues 410-483 (LTSKKSNTST…STANSQSSSE (74 aa)). Positions 413–430 (KKSNTSTNDNSSNTSGNQ) are enriched in low complexity. Residues 431 to 454 (DTDKQTNDQKNNQQEDTKNTDKNN) show a composition bias toward basic and acidic residues.

In terms of assembly, interacts with CdaA.

It is found in the cell membrane. In terms of biological role, upon coexpression in E.coli stimulates the diadenylate cyclase activity of CdaA about 20-fold. In B.subtilis c-di-AMP is a second messenger that mediates growth, DNA repair and cell wall homeostasis; it is toxic when present in excess. The polypeptide is CdaA regulatory protein CdaR (Bacillus subtilis (strain 168)).